A 258-amino-acid polypeptide reads, in one-letter code: MYPECGVETKSRPCSKQLQEEVSYPEWISRSYVELMSLNEHSMQALSWRKLYLSRAKLKASSRTSALLSGFAMVAMVEVQLEPNHAYPPGLLIAFSACTTVLVAVHLFALMVSTCILPNIEAVSNVHNLNSVKESPHERMHHHIELAWAFSTVIGTLLFLAEVVLLCWVKFLPVNSPKISSNETSAVSSGQAAAITSTAIMVPFGLVFIVFAVHFYRSLVSHKTDRQFQELNELAELAQLQDQLDHRGDPVQSPVHYA.

At 1–63 (MYPECGVETK…SRAKLKASSR (63 aa)) the chain is on the cytoplasmic side. The chain crosses the membrane as a helical span at residues 64–81 (TSALLSGFAMVAMVEVQL). At 82 to 91 (EPNHAYPPGL) the chain is on the extracellular side. The helical transmembrane segment at 92–112 (LIAFSACTTVLVAVHLFALMV) threads the bilayer. The Cytoplasmic portion of the chain corresponds to 113-145 (STCILPNIEAVSNVHNLNSVKESPHERMHHHIE). Residues 146–166 (LAWAFSTVIGTLLFLAEVVLL) form a helical membrane-spanning segment. The Extracellular segment spans residues 167–192 (CWVKFLPVNSPKISSNETSAVSSGQA). Asparagine 182 carries an N-linked (GlcNAc...) asparagine glycan. A helical membrane pass occupies residues 193–213 (AAITSTAIMVPFGLVFIVFAV). Topologically, residues 214-258 (HFYRSLVSHKTDRQFQELNELAELAQLQDQLDHRGDPVQSPVHYA) are cytoplasmic.

It belongs to the Orai family.

It is found in the cell membrane. Functionally, ca(2+) release-activated Ca(2+) (CRAC) channel subunit which mediates Ca(2+) influx following depletion of intracellular Ca(2+) stores. The chain is Calcium release-activated calcium channel protein 1 (orai1) from Xenopus laevis (African clawed frog).